The chain runs to 406 residues: Vacuole membrane protein 1 (406 aa).

A compositionally biased stretch (basic and acidic residues) spans 1–21 (MAENGKNCDQRRVAMNKEHHN). The tract at residues 1-35 (MAENGKNCDQRRVAMNKEHHNGNFTDPSSVNEKKR) is disordered. N-acetylalanine is present on Ala-2. The Cytoplasmic segment spans residues 2–43 (AENGKNCDQRRVAMNKEHHNGNFTDPSSVNEKKRREREERQN). A helical membrane pass occupies residues 44-64 (IVLWRQPLITLQYFSLEILVI). The Extracellular portion of the chain corresponds to 65-77 (LKEWTSKLWHRQS). The helical transmembrane segment at 78–98 (IVVSFLLLLAVLIATYYVEGV) threads the bilayer. The Cytoplasmic segment spans residues 99 to 109 (HQQYVQRIEKQ). The chain crosses the membrane as a helical span at residues 110-130 (FLLYAYWIGLGILSSVGLGTG). Residues 131-250 (LHTFLLYLGP…ASRAKLAVQK (120 aa)) are Extracellular-facing. Residues 173-316 (GTEGTISLWS…FVIITFSKHI (144 aa)) are VTT domain. The helical transmembrane segment at 251–271 (LVQKVGFFGILACASIPNPLF) threads the bilayer. Topologically, residues 272–273 (DL) are cytoplasmic. A helical membrane pass occupies residues 274–294 (AGITCGHFLVPFWTFFGATLI). Residues 295–305 (GKAIIKMHIQK) are Extracellular-facing. The helical transmembrane segment at 306 to 326 (IFVIITFSKHIVEQMVAFIGA) threads the bilayer. The Cytoplasmic segment spans residues 327–363 (VPGIGPSLQKPFQEYLEAQRQKLHHKSEMGTPQGENW). The helical transmembrane segment at 364–384 (LSWMFEKLVVVMVCYFILSII) threads the bilayer. Residues 385–406 (NSMAQSYAKRIQQRLNSEEKTK) lie on the Extracellular side of the membrane.

The protein belongs to the VMP1 family. As to quaternary structure, interacts with BECN1. Interacts with TJP1. Interacts with TP53INP2. Interacts with TMEM41B. Interacts with ATP2A2, PLN and SLN; competes with PLN and SLN to prevent them from forming an inhibitory complex with ATP2A2. Interacts with ATG2A.

Its subcellular location is the endoplasmic reticulum-Golgi intermediate compartment membrane. The protein localises to the cell membrane. The protein resides in the vacuole membrane. It is found in the endoplasmic reticulum membrane. The enzyme catalyses a 1,2-diacyl-sn-glycero-3-phospho-L-serine(in) = a 1,2-diacyl-sn-glycero-3-phospho-L-serine(out). The catalysed reaction is cholesterol(in) = cholesterol(out). It catalyses the reaction a 1,2-diacyl-sn-glycero-3-phosphocholine(in) = a 1,2-diacyl-sn-glycero-3-phosphocholine(out). It carries out the reaction a 1,2-diacyl-sn-glycero-3-phosphoethanolamine(in) = a 1,2-diacyl-sn-glycero-3-phosphoethanolamine(out). Functionally, phospholipid scramblase involved in lipid homeostasis and membrane dynamics processes. Has phospholipid scramblase activity toward cholesterol and phosphatidylserine, as well as phosphatidylethanolamine and phosphatidylcholine. Required for autophagosome formation: participates in early stages of autophagosome biogenesis at the endoplasmic reticulum (ER) membrane by reequilibrating the leaflets of the ER as lipids are extracted by ATG2 (ATG2A or ATG2B) to mediate autophagosome assembly. Regulates ATP2A2 activity to control ER-isolation membrane contacts for autophagosome formation. In addition to autophagy, involved in other processes in which phospholipid scramblase activity is required. Modulates ER contacts with lipid droplets, mitochondria and endosomes. Plays an essential role in formation of cell junctions. Upon stress such as bacterial and viral infection, promotes formation of cytoplasmic vacuoles followed by cell death. Involved in the cytoplasmic vacuolization of acinar cells during the early stage of acute pancreatitis. Its function is as follows. (Microbial infection) Host factor required for infection by all flaviviruses tested such as Zika virus and Yellow fever virus. Probably required post-entry of the virus to facilitate the ER membrane remodeling necessary to form replication organelles. The protein is Vacuole membrane protein 1 of Homo sapiens (Human).